Consider the following 115-residue polypeptide: Large ribosomal subunit protein P1 (115 aa).

The segment covering 56–73 has biased composition (low complexity); it reads QAAAAPVPASGGAAAPAE. The interval 56-115 is disordered; sequence QAAAAPVPASGGAAAPAEGDADEADEADEEAEEEAADDGGDDDDDEDDEASGEGLGELFG. Residues 74–106 show a composition bias toward acidic residues; the sequence is GDADEADEADEEAEEEAADDGGDDDDDEDDEAS.

The protein belongs to the eukaryotic ribosomal protein P1/P2 family. As to quaternary structure, part of the 50S ribosomal subunit. Homodimer, it forms part of the ribosomal stalk which helps the ribosome interact with GTP-bound translation factors. Forms a heptameric uL10/P0(P1)2(P1)2(P1)2 complex, where uL10/P0 forms an elongated spine to which the P1 dimers bind in a sequential fashion.

Forms part of the ribosomal stalk, playing a central role in the interaction of the ribosome with GTP-bound translation factors. This chain is Large ribosomal subunit protein P1, found in Haloarcula marismortui (strain ATCC 43049 / DSM 3752 / JCM 8966 / VKM B-1809) (Halobacterium marismortui).